A 606-amino-acid chain; its full sequence is V-type proton ATPase catalytic subunit A (606 aa).

239-246 (GAFGCGKT) is a binding site for ATP.

It belongs to the ATPase alpha/beta chains family. V-ATPase is a heteromultimeric enzyme made up of two complexes: the ATP-hydrolytic V1 complex and the proton translocation V0 complex. The V1 complex consists of three catalytic AB heterodimers that form a heterohexamer, three peripheral stalks each consisting of EG heterodimers, one central rotor including subunits D and F, and the regulatory subunits C and H. The proton translocation complex V0 consists of the proton transport subunit a, a ring of proteolipid subunits c9c'', rotary subunit d, subunits e and f, and the accessory subunits vah-19/Ac45 and vah-20/PRR.

The catalysed reaction is ATP + H2O + 4 H(+)(in) = ADP + phosphate + 5 H(+)(out). Its function is as follows. Catalytic subunit of the V1 complex of vacuolar(H+)-ATPase (V-ATPase), a multisubunit enzyme composed of a peripheral complex (V1) that hydrolyzes ATP and a membrane integral complex (V0) that translocates protons. V-ATPase is responsible for acidifying and maintaining the pH of intracellular compartments and in some cell types, is targeted to the plasma membrane, where it is responsible for acidifying the extracellular environment. Required along with other vacuolar ATPase components for the removal of protein aggregates which form in immature oocytes in the distal gonad. This removal occurs as the oocytes mature and move to the proximal gonad, is triggered by the introduction of sperm through mating and occurs before fertilization. The introduction of sperm triggers V-ATPase accumulation in proximal oocytes and induces lysosomal acidification which leads to engulfing of protein aggregates by lysosomes and subsequent clearance of the aggregates. Lysosomal acidification also leads to changes in mitochondrial morphology and function. Mitochondria in distal immature oocytes are fragmented, produce high levels of reactive oxygen species (ROS) and have high membrane potential, indicative of metabolic inactivity. In contrast, mitochondria in proximal mature oocytes are tubular with lower ROS levels and membrane potential, indicative of an active metabolic state required for aggregate mobilization before clearance. Involved in receptor-mediated endocytosis. The protein is V-type proton ATPase catalytic subunit A of Caenorhabditis briggsae.